The sequence spans 89 residues: Small ribosomal subunit protein uS14 (89 aa).

Belongs to the universal ribosomal protein uS14 family. Part of the 30S ribosomal subunit. Contacts proteins S3 and S10.

Binds 16S rRNA, required for the assembly of 30S particles and may also be responsible for determining the conformation of the 16S rRNA at the A site. The protein is Small ribosomal subunit protein uS14 of Exiguobacterium sibiricum (strain DSM 17290 / CCUG 55495 / CIP 109462 / JCM 13490 / 255-15).